The sequence spans 290 residues: MDIEAYYQRIGYKNPRNKLDLESLTDIFQHQIRTVPYENLSIHCGESMELDLEAIFDQIVRRNRGGWCLQVNYLLYWALTTTGFETTMLGGFVCGSHTDKYSTGMIHLIVQVTINGRNYIVDAGFGRSYQMWQPVELISGKDQPQVPSIFRLREEGETWYLDQIRRQQHVPDQEFLNSELLERKTHRKLYCFTLQPRTIEEFESANTYLQISPSSPFLDKSICSLQTPEGVHCLVGLILTFRTYNYKENTDLVEFKVLTEEEVEEVLKTIFNISLGKKLVSKNGNLFFTI.

An N-acetylmethionine modification is found at Met-1. Cys-68 acts as the Acyl-thioester intermediate in catalysis. Positions 103 and 104 each coordinate CoA. Residue 106-107 coordinates substrate; it reads IH. Catalysis depends on residues His-107 and Asp-122. Residues Tyr-208 and Ser-214 each coordinate CoA.

Belongs to the arylamine N-acetyltransferase family.

It is found in the cytoplasm. It carries out the reaction an arylamine + acetyl-CoA = an N-acetylarylamine + CoA. The polypeptide is Arylamine N-acetyltransferase 1 (NAT1) (Oryctolagus cuniculus (Rabbit)).